The following is a 226-amino-acid chain: 7-cyano-7-deazaguanine synthase (226 aa).

10-20 (LSGGLDSATAA) lines the ATP pocket. 4 residues coordinate Zn(2+): C191, C199, C202, and C205.

The protein belongs to the QueC family. Zn(2+) serves as cofactor.

The enzyme catalyses 7-carboxy-7-deazaguanine + NH4(+) + ATP = 7-cyano-7-deazaguanine + ADP + phosphate + H2O + H(+). It functions in the pathway purine metabolism; 7-cyano-7-deazaguanine biosynthesis. Functionally, catalyzes the ATP-dependent conversion of 7-carboxy-7-deazaguanine (CDG) to 7-cyano-7-deazaguanine (preQ(0)). This is 7-cyano-7-deazaguanine synthase from Synechococcus sp. (strain CC9902).